Reading from the N-terminus, the 432-residue chain is Putative cyclin-F1-4 (432 aa).

This sequence belongs to the cyclin family. Cyclin F subfamily.

The sequence is that of Putative cyclin-F1-4 (CycF1-4) from Oryza sativa subsp. japonica (Rice).